The primary structure comprises 729 residues: uncharacterized protein (729 aa).

It belongs to the mimivirus L515/L516 family.

It is found in the virion. This is an uncharacterized protein from Acanthamoeba polyphaga mimivirus (APMV).